The primary structure comprises 461 residues: Cytochrome c biogenesis protein CcsB (461 aa).

3 consecutive transmembrane segments (helical) span residues 32 to 52 (LRLAIALLLIIALFSISGTVI), 91 to 111 (TWWFLSLLVLFGTSLTACTFT), and 178 to 198 (IGPIIVHIGIVTILLGSIWGA).

Belongs to the Ccs1/CcsB family. In terms of assembly, may interact with CcsA.

The protein localises to the cellular thylakoid membrane. Required during biogenesis of c-type cytochromes (cytochrome c6 and cytochrome f) at the step of heme attachment. This Nostoc sp. (strain PCC 7120 / SAG 25.82 / UTEX 2576) protein is Cytochrome c biogenesis protein CcsB.